Consider the following 380-residue polypeptide: MAPNLRKSHPLLKMVNNSLIDLPTPPNISAWWNFGSLLGICLTTQILTGLLLAMHYTADTTLAFSSVAHTCRNVQYGWLIRNIHANGASFFFICIYLHIGRGLYYGSYLYKETWNTGILLLLTLMATAFVGYVLPWGQMSFWGATVITNLFSAIPYIGQTIVEWAWGGFSVDNPTLTRFFALHFLLPFMIAGLTLIHLTFLHESGSNNPLGIVSNCDKIPFHPYFSLKDTLGFMLMLLPLTTLALFSPNLLGDPENFTPANPLVTPPHIKPEWYFLFAYAILRSIPNKLGGVLALAASVLILFLSPLLHKSKQRTMAFRPLSQLLFWILIANLFILTWVGSQPVEHPFIIIGQLASLTYFTILLILLPITGALENKMLNY.

The next 4 helical transmembrane spans lie at 34 to 54 (FGSL…LLAM), 78 to 99 (WLIR…YLHI), 114 to 134 (WNTG…GYVL), and 179 to 199 (FFAL…IHLT). Heme b is bound by residues His-84 and His-98. Residues His-183 and His-197 each contribute to the heme b site. His-202 contacts a ubiquinone. Helical transmembrane passes span 227-247 (LKDT…ALFS), 289-309 (LGGV…PLLH), 321-341 (LSQL…WVGS), and 348-368 (FIII…ILLP).

Belongs to the cytochrome b family. The cytochrome bc1 complex contains 11 subunits: 3 respiratory subunits (MT-CYB, CYC1 and UQCRFS1), 2 core proteins (UQCRC1 and UQCRC2) and 6 low-molecular weight proteins (UQCRH/QCR6, UQCRB/QCR7, UQCRQ/QCR8, UQCR10/QCR9, UQCR11/QCR10 and a cleavage product of UQCRFS1). This cytochrome bc1 complex then forms a dimer. The cofactor is heme b.

It is found in the mitochondrion inner membrane. Its function is as follows. Component of the ubiquinol-cytochrome c reductase complex (complex III or cytochrome b-c1 complex) that is part of the mitochondrial respiratory chain. The b-c1 complex mediates electron transfer from ubiquinol to cytochrome c. Contributes to the generation of a proton gradient across the mitochondrial membrane that is then used for ATP synthesis. The protein is Cytochrome b (MT-CYB) of Fregetta tropica (Black-bellied storm-petrel).